A 155-amino-acid chain; its full sequence is Ribonuclease H (155 aa).

One can recognise an RNase H type-1 domain in the interval 5 to 146 (DQKPVIIHTD…ADQLARDGLT (142 aa)). Residues D14, E52, D74, and D138 each contribute to the Mg(2+) site. Positions 133-155 (ENERADQLARDGLTENRMKSRVK) are disordered.

The protein belongs to the RNase H family. In terms of assembly, monomer. Mg(2+) is required as a cofactor.

It is found in the cytoplasm. The catalysed reaction is Endonucleolytic cleavage to 5'-phosphomonoester.. In terms of biological role, endonuclease that specifically degrades the RNA of RNA-DNA hybrids. This is Ribonuclease H from Rhodopseudomonas palustris (strain ATCC BAA-98 / CGA009).